We begin with the raw amino-acid sequence, 273 residues long: NH(3)-dependent NAD(+) synthetase (273 aa).

Glycine 47 to serine 54 contacts ATP. Aspartate 53 lines the Mg(2+) pocket. Deamido-NAD(+) is bound at residue arginine 139. Threonine 159 is a binding site for ATP. Glutamate 164 contributes to the Mg(2+) binding site. Residues lysine 172 and aspartate 179 each coordinate deamido-NAD(+). ATP contacts are provided by lysine 188 and threonine 210. Position 259–260 (histidine 259–lysine 260) interacts with deamido-NAD(+).

Belongs to the NAD synthetase family. Homodimer.

The catalysed reaction is deamido-NAD(+) + NH4(+) + ATP = AMP + diphosphate + NAD(+) + H(+). Its pathway is cofactor biosynthesis; NAD(+) biosynthesis; NAD(+) from deamido-NAD(+) (ammonia route): step 1/1. In terms of biological role, catalyzes the ATP-dependent amidation of deamido-NAD to form NAD. Uses ammonia as a nitrogen source. The chain is NH(3)-dependent NAD(+) synthetase from Staphylococcus aureus (strain COL).